The sequence spans 387 residues: Colicin-N (387 aa).

A compositionally biased stretch (polar residues) spans 1 to 11 (MGSNGADNAHN). Residues 1 to 106 (MGSNGADNAH…ITITPDNSKP (106 aa)) are disordered. The segment covering 14–30 (FGGGKNPGIGNTSGAGS) has biased composition (gly residues). Residues 31 to 48 (NGSASSNRGNSNGWSWSN) are compositionally biased toward low complexity. A compositionally biased stretch (gly residues) spans 78–87 (GNSGNRGNNG). 2 helical membrane-spanning segments follow: residues 325–345 (IIGGVVAGVAISLFGAVLSFL) and 350–370 (LAVTALGVIGIMTISYLSSFI).

It belongs to the channel forming colicin family.

The protein resides in the cell membrane. Functionally, this colicin is a channel-forming colicin. This class of transmembrane toxins depolarize the cytoplasmic membrane, leading to dissipation of cellular energy. In terms of biological role, colicins are polypeptide toxins produced by and active against E.coli and closely related bacteria. The sequence is that of Colicin-N (cna) from Escherichia coli.